We begin with the raw amino-acid sequence, 425 residues long: SrfA-induced gene G protein (425 aa).

3 N-linked (GlcNAc...) asparagine glycosylation sites follow: Asn25, Asn28, and Asn36. Coiled-coil stretches lie at residues 41–91 (RDSE…RIRN), 172–208 (HEKQ…MKRT), and 292–340 (KFGQ…NYNI). A helical transmembrane segment spans residues 91–113 (NVFKVLITILVGSIIYGTYTNQF). The segment at 393–413 (KKPHADSNGHPKPYPHHHLLN) is disordered.

The protein resides in the membrane. The sequence is that of SrfA-induced gene G protein (sigG) from Dictyostelium discoideum (Social amoeba).